Here is a 1588-residue protein sequence, read N- to C-terminus: MVQLAKVPILGNDIIHVGYNIHDHLVETIIKHCPSSTYVICNDTNLSKVPYYQQLVLEFKASLPEGSRLLTYVVKPGETSKSRETKAQLEDYLLVEGCTRDTVMVAIGGGVIGDMIGFVASTFMRGVRVVQVPTSLLAMVDSSIGGKTAIDTPLGKNFIGAFWQPKFVLVDIKWLETLAKREFINGMAEVIKTACIWNADEFTRLESNASLFLNVVNGAKNVKVTNQLTNEIDEISNTDIEAMLDHTYKLVLESIKVKAEVVSSDERESSLRNLLNFGHSIGHAYEAILTPQALHGECVSIGMVKEAELSRYFGILSPTQVARLSKILVAYGLPVSPDEKWFKELTLHKKTPLDILLKKMSIDKKNEGSKKKVVILESIGKCYGDSAQFVSDEDLRFILTDETLVYPFKDIPADQQKVVIPPGSKSISNRALILAALGEGQCKIKNLLHSDDTKHMLTAVHELKGATISWEDNGETVVVEGHGGSTLSACADPLYLGNAGTASRFLTSLAALVNSTPSQKYIVLTGNARMQQRPIAPLVDSLRANGTKIEYLNNEGSLPIKVYTDSVFKGGRIELAATVSSQYVSSILMCAPYAEEPVTLALVGGKPISKLYVDMTIKMMEKFGINVETSTTEPYTYYIPKGHYINPSEYVIESDASSATYPLAFAAMTGTTVTVPNIGFESLQGDARFARDVLKPMGCKITQTATSTTVSGPPVGTLKPLKHVDMEPMTDAFLTACVVAAISHDSDPNSANTTTIEGIANQRVKECNRILAMATELAKFGVKTTELPDGIQVHGLNSIKDLKVPSDSSGPVGVCTYDDHRVAMSFSLLAGMVNSQNERDEVANPVRILERHCTGKTWPGWWDVLHSELGAKLDGAEPLECTSKKNSKKSVVIIGMRAAGKTTISKWCASALGYKLVDLDELFEQQHNNQSVKQFVVENGWEKFREEETRIFKEVIQNYGDDGYVFSTGGGIVESAESRKALKDFASSGGYVLHLHRDIEETIVFLQSDPSRPAYVEEIREVWNRREGWYKECSNFSFFAPHCSAEAEFQALRRSFSKHIATITGVREIEIPSGRSAFVCLTFDDLTEQTENLTPICYGCEAVEVRVDHLANYSADFVSKQLSILRKATDSIPIIFTVRTMKQGGNFPDEEFKTLRELYDIALKNGVEFLDLELTLPTDIQYEVINKRGNTKIIGSHHDFQGLYSWDDAEWENRFNQALTLDVDVVKFVGTAVNFEDNLRLEHFRDTHKNKPLIAVNMTSKGSISRVLNNVLTPVTSDLLPNSAAPGQLTVAQINKMYTSMGGIEPKELFVVGKPIGHSRSPILHNTGYEILGLPHKFDKFETESAQLVKEKLLDGNKNFGGAAVTIPLKLDIMQYMDELTDAAKVIGAVNTVIPLGNKKFKGDNTDWLGIRNALINNGVPEYVGHTAGLVIGAGGTSRAALYALHSLGCKKIFIINRTTSKLKPLIESLPSEFNIIGIESTKSIEEIKEHVGVAVSCVPADKPLDDELLSKLERFLVKGAHAAFVPTLLEAAYKPSVTPVMTISQDKYQWHVVPGSQMLVHQGVAQFEKWTGFKGPFKAIFDAVTKE.

Residues 1 to 392 (MVQLAKVPIL…YGDSAQFVSD (392 aa)) are 3-dehydroquinate synthase. NAD(+) is bound by residues 43-45 (DTN), 78-81 (ETSK), 109-111 (GGV), and Asp-114. Residue Arg-125 participates in 7-phospho-2-dehydro-3-deoxy-D-arabino-heptonate binding. 134–135 (TS) contributes to the NAD(+) binding site. 2 residues coordinate 7-phospho-2-dehydro-3-deoxy-D-arabino-heptonate: Asp-141 and Lys-147. Position 156 (Lys-156) interacts with NAD(+). Asn-157 is a 7-phospho-2-dehydro-3-deoxy-D-arabino-heptonate binding site. Residues 174–177 (WLET) and Asn-185 each bind NAD(+). Glu-189 serves as a coordination point for Zn(2+). Residues 189–192 (EVIK) and Lys-258 each bind 7-phospho-2-dehydro-3-deoxy-D-arabino-heptonate. Glu-268 acts as the Proton acceptor; for 3-dehydroquinate synthase activity in catalysis. 7-phospho-2-dehydro-3-deoxy-D-arabino-heptonate is bound by residues 272 to 276 (RNLLN) and His-279. His-279 serves as a coordination point for Zn(2+). The active-site Proton acceptor; for 3-dehydroquinate synthase activity is the His-283. 7-phospho-2-dehydro-3-deoxy-D-arabino-heptonate is bound by residues His-295 and Lys-364. Position 295 (His-295) interacts with Zn(2+). The segment at 405 to 871 (VYPFKDIPAD…WDVLHSELGA (467 aa)) is EPSP synthase. Cys-853 serves as the catalytic For EPSP synthase activity. The shikimate kinase stretch occupies residues 890-1080 (SVVIIGMRAA…IPSGRSAFVC (191 aa)). An ATP-binding site is contributed by 895-902 (GMRAAGKT). A 3-dehydroquinase region spans residues 1081 to 1293 (LTFDDLTEQT…AAPGQLTVAQ (213 aa)). The Proton acceptor; for 3-dehydroquinate dehydratase activity role is filled by His-1198. Lys-1227 acts as the Schiff-base intermediate with substrate; for 3-dehydroquinate dehydratase activity in catalysis. Residues 1306 to 1588 (PKELFVVGKP…KAIFDAVTKE (283 aa)) form a shikimate dehydrogenase region.

In the N-terminal section; belongs to the sugar phosphate cyclases superfamily. Dehydroquinate synthase family. This sequence in the 2nd section; belongs to the EPSP synthase family. It in the 3rd section; belongs to the shikimate kinase family. The protein in the 4th section; belongs to the type-I 3-dehydroquinase family. In the C-terminal section; belongs to the shikimate dehydrogenase family. As to quaternary structure, homodimer. Zn(2+) serves as cofactor.

It is found in the cytoplasm. The enzyme catalyses 7-phospho-2-dehydro-3-deoxy-D-arabino-heptonate = 3-dehydroquinate + phosphate. It carries out the reaction 3-dehydroquinate = 3-dehydroshikimate + H2O. The catalysed reaction is shikimate + NADP(+) = 3-dehydroshikimate + NADPH + H(+). It catalyses the reaction shikimate + ATP = 3-phosphoshikimate + ADP + H(+). The enzyme catalyses 3-phosphoshikimate + phosphoenolpyruvate = 5-O-(1-carboxyvinyl)-3-phosphoshikimate + phosphate. The protein operates within metabolic intermediate biosynthesis; chorismate biosynthesis; chorismate from D-erythrose 4-phosphate and phosphoenolpyruvate: step 2/7. It participates in metabolic intermediate biosynthesis; chorismate biosynthesis; chorismate from D-erythrose 4-phosphate and phosphoenolpyruvate: step 3/7. Its pathway is metabolic intermediate biosynthesis; chorismate biosynthesis; chorismate from D-erythrose 4-phosphate and phosphoenolpyruvate: step 4/7. It functions in the pathway metabolic intermediate biosynthesis; chorismate biosynthesis; chorismate from D-erythrose 4-phosphate and phosphoenolpyruvate: step 5/7. The protein operates within metabolic intermediate biosynthesis; chorismate biosynthesis; chorismate from D-erythrose 4-phosphate and phosphoenolpyruvate: step 6/7. Functionally, the AROM polypeptide catalyzes 5 consecutive enzymatic reactions in prechorismate polyaromatic amino acid biosynthesis. This chain is Pentafunctional AROM polypeptide, found in Saccharomyces cerevisiae (strain Lalvin EC1118 / Prise de mousse) (Baker's yeast).